Consider the following 109-residue polypeptide: Ribonuclease P protein component (109 aa).

Belongs to the RnpA family. Consists of a catalytic RNA component (M1 or rnpB) and a protein subunit.

The catalysed reaction is Endonucleolytic cleavage of RNA, removing 5'-extranucleotides from tRNA precursor.. Functionally, RNaseP catalyzes the removal of the 5'-leader sequence from pre-tRNA to produce the mature 5'-terminus. It can also cleave other RNA substrates such as 4.5S RNA. The protein component plays an auxiliary but essential role in vivo by binding to the 5'-leader sequence and broadening the substrate specificity of the ribozyme. The polypeptide is Ribonuclease P protein component (Streptococcus agalactiae serotype Ia (strain ATCC 27591 / A909 / CDC SS700)).